The chain runs to 662 residues: ABC transporter G family member 17 (662 aa).

The 255-residue stretch at 22-276 folds into the ABC transporter domain; the sequence is LAFNDLTYNV…FSEFGSPIPE (255 aa). Residue 69-76 participates in ATP binding; that stretch reads GASGAGKS. In terms of domain architecture, ABC transmembrane type-2 spans 356-566; sequence VETVILAKRY…PYEAVLHNEF (211 aa). Helical transmembrane passes span 375–395, 410–430, 451–471, 486–508, 514–536, and 635–655; these read LIGTRVFIVMMTGFLLATVYW, FFSFAMATMFYSCADGLPAFI, VISHSLVTLPHLFALSIGFAA, FIYYLMIIFASFWSGCSFVTFVS, VMMSYMVTFGYLSYCLLFSGFYV, and LWVTLAWGFFFRILFYFSLLL.

The protein belongs to the ABC transporter superfamily. ABCG family. Eye pigment precursor importer (TC 3.A.1.204) subfamily.

It localises to the membrane. The chain is ABC transporter G family member 17 (ABCG17) from Arabidopsis thaliana (Mouse-ear cress).